The sequence spans 192 residues: Pyridoxal 5'-phosphate synthase subunit PdxT (192 aa).

L-glutamine is bound at residue 46-48 (GES). Catalysis depends on C77, which acts as the Nucleophile. Residues R103 and 131 to 132 (IR) each bind L-glutamine. Residues H167 and E169 each act as charge relay system in the active site.

Belongs to the glutaminase PdxT/SNO family. In the presence of PdxS, forms a dodecamer of heterodimers. Only shows activity in the heterodimer.

It carries out the reaction aldehydo-D-ribose 5-phosphate + D-glyceraldehyde 3-phosphate + L-glutamine = pyridoxal 5'-phosphate + L-glutamate + phosphate + 3 H2O + H(+). The catalysed reaction is L-glutamine + H2O = L-glutamate + NH4(+). It participates in cofactor biosynthesis; pyridoxal 5'-phosphate biosynthesis. Functionally, catalyzes the hydrolysis of glutamine to glutamate and ammonia as part of the biosynthesis of pyridoxal 5'-phosphate. The resulting ammonia molecule is channeled to the active site of PdxS. This is Pyridoxal 5'-phosphate synthase subunit PdxT from Exiguobacterium sibiricum (strain DSM 17290 / CCUG 55495 / CIP 109462 / JCM 13490 / 255-15).